Reading from the N-terminus, the 290-residue chain is MASTPAEYIQHHLQNLTYGKLPAGYERADGSILDQATWTIAQTGAEARDMGFMAVHLDTLGWSLLMGAIFILLFRSAAKAATAGVPGKLQNLVEMCVEFVEGVVKDTFHGRNPLIAPLALTIFVWVFLMNSLKWIPVDYIPGIAHLLGLPAFKIVPTADPNGTFGLSLGVFILILFYSFKVKGFGGFTKELAFTPFNHWSLVPFNLFLEILGLLTKPLSLALRLFGNMYAGEVVFILIALLPFYVQWTLNVPWAIFHILVIPLQAFIFMVLTVVYLSSAHEDHGHAELTP.

7 consecutive transmembrane segments (helical) span residues 54–74, 115–135, 136–156, 164–184, 201–221, 233–253, and 254–274; these read AVHL…ILLF, IAPL…LKWI, PVDY…KIVP, FGLS…VKGF, LVPF…LSLA, VVFI…NVPW, and AIFH…LTVV.

Belongs to the ATPase A chain family. F-type ATPases have 2 components, CF(1) - the catalytic core - and CF(0) - the membrane proton channel. CF(1) has five subunits: alpha(3), beta(3), gamma(1), delta(1), epsilon(1). CF(0) has three main subunits: a(1), b(2) and c(9-12). The alpha and beta chains form an alternating ring which encloses part of the gamma chain. CF(1) is attached to CF(0) by a central stalk formed by the gamma and epsilon chains, while a peripheral stalk is formed by the delta and b chains.

Its subcellular location is the cell inner membrane. Functionally, key component of the proton channel; it plays a direct role in the translocation of protons across the membrane. This Stutzerimonas stutzeri (strain A1501) (Pseudomonas stutzeri) protein is ATP synthase subunit a.